The sequence spans 206 residues: Small ribosomal subunit protein uS4 (206 aa).

The region spanning Gly96 to Lys156 is the S4 RNA-binding domain.

Belongs to the universal ribosomal protein uS4 family. Part of the 30S ribosomal subunit. Contacts protein S5. The interaction surface between S4 and S5 is involved in control of translational fidelity.

Functionally, one of the primary rRNA binding proteins, it binds directly to 16S rRNA where it nucleates assembly of the body of the 30S subunit. With S5 and S12 plays an important role in translational accuracy. This is Small ribosomal subunit protein uS4 from Salmonella agona (strain SL483).